We begin with the raw amino-acid sequence, 315 residues long: Glutamine synthetase nodule isozyme (315 aa).

A GS beta-grasp domain is found at 19–99; it reads IIAEYIWVGG…VICDTYTPSG (81 aa). The 210-residue stretch at 106-315 folds into the GS catalytic domain; sequence KRHAAAKIFS…WGVANRGASI (210 aa).

Belongs to the glutamine synthetase family. Homooctamer.

The protein localises to the cytoplasm. The enzyme catalyses L-glutamate + NH4(+) + ATP = L-glutamine + ADP + phosphate + H(+). The polypeptide is Glutamine synthetase nodule isozyme (Lupinus angustifolius (Narrow-leaved blue lupine)).